A 350-amino-acid polypeptide reads, in one-letter code: 3'-hydroxy-N-methyl-(S)-coclaurine 4'-O-methyltransferase (350 aa).

Residues Gly196, Asp219, Asp239, Met240, and Lys253 each coordinate S-adenosyl-L-methionine. Residue His257 is the Proton acceptor of the active site.

This sequence belongs to the class I-like SAM-binding methyltransferase superfamily. Cation-independent O-methyltransferase family. COMT subfamily. Homodimer.

The enzyme catalyses (S)-3'-hydroxy-N-methylcoclaurine + S-adenosyl-L-methionine = (S)-reticuline + S-adenosyl-L-homocysteine + H(+). It participates in alkaloid biosynthesis; (S)-reticuline biosynthesis; (S)-reticuline from (S)-norcoclaurine: step 4/4. Catalyzes the transfer of the methyl group to the 4'-hydroxyl group of 3'-hydroxy-N-methylcoclaurine to form reticuline. This Coptis japonica (Japanese goldthread) protein is 3'-hydroxy-N-methyl-(S)-coclaurine 4'-O-methyltransferase.